Reading from the N-terminus, the 102-residue chain is Co-chaperonin GroES (102 aa).

This sequence belongs to the GroES chaperonin family. In terms of assembly, heptamer of 7 subunits arranged in a ring. Interacts with the chaperonin GroEL.

Its subcellular location is the cytoplasm. Functionally, together with the chaperonin GroEL, plays an essential role in assisting protein folding. The GroEL-GroES system forms a nano-cage that allows encapsulation of the non-native substrate proteins and provides a physical environment optimized to promote and accelerate protein folding. GroES binds to the apical surface of the GroEL ring, thereby capping the opening of the GroEL channel. The polypeptide is Co-chaperonin GroES (Streptomyces griseus subsp. griseus (strain JCM 4626 / CBS 651.72 / NBRC 13350 / KCC S-0626 / ISP 5235)).